A 137-amino-acid polypeptide reads, in one-letter code: Peptide methionine sulfoxide reductase MsrB (137 aa).

One can recognise a MsrB domain in the interval 7 to 129 (PTENIEKLTD…NSASLNFVDD (123 aa)). Residues Cys46, Cys49, Cys95, and Cys98 each coordinate Zn(2+). Cys118 functions as the Nucleophile in the catalytic mechanism.

It belongs to the MsrB Met sulfoxide reductase family. It depends on Zn(2+) as a cofactor.

It carries out the reaction L-methionyl-[protein] + [thioredoxin]-disulfide + H2O = L-methionyl-(R)-S-oxide-[protein] + [thioredoxin]-dithiol. This chain is Peptide methionine sulfoxide reductase MsrB, found in Yersinia enterocolitica serotype O:8 / biotype 1B (strain NCTC 13174 / 8081).